The following is an 869-amino-acid chain: Phosphatidylethanolamine N-methyltransferase (869 aa).

The residue at position 2 (Ser-2) is an N-acetylserine. At 2-55 (SSCKTTLSEMVGSVTKDRGTINVEARTRSSNVTFKPPVTHDMVRSLFDPTLKKS) the chain is on the lumenal side. A helical membrane pass occupies residues 56-76 (LLEKCIALAIISNFFICYWVF). Residues 77–86 (QRFGLQFTKY) are Cytoplasmic-facing. A helical membrane pass occupies residues 87 to 107 (FFLVQYLFWRIAYNLGIGLVL). Over 108-187 (HYQSHYETLT…EINVWLIFRQ (80 aa)) the chain is Lumenal. The helical transmembrane segment at 188–208 (FVDLILMQDFVTYIIYVYLSI) threads the bilayer. The Cytoplasmic segment spans residues 209–212 (PYSW). The chain crosses the membrane as a helical span at residues 213–233 (VQIFNWRSLLGVILILFNIWV). Residues 234 to 258 (KLDAHRVVKDYAWYWGDFFFLEESE) lie on the Lumenal side of the membrane. The chain crosses the membrane as a helical span at residues 259–279 (LIFDGVFNISPHPMYSIGYLG). Residues 280–291 (YYGLSLICNDYK) are Cytoplasmic-facing. A helical transmembrane segment spans residues 292-310 (VLLVSVFGHYSQFLFLKYV). Over 311–362 (ENPHIERTYGDGTDSDSQMNSRIDDLISKENYDYSRPLINMGLSFNNFNKLR) the chain is Lumenal. The helical transmembrane segment at 363–383 (FTDYFTIGTVAALMLGTIMNA) threads the bilayer. The Cytoplasmic portion of the chain corresponds to 384–389 (RFINLN). A helical membrane pass occupies residues 390–410 (YLFITVFVTKLVSWLFISTIL). The Lumenal portion of the chain corresponds to 411–439 (YKQSQSKWFTRLFLENGYTQVYSYEQWQF). Residues 440-460 (IYNYYLVLTYTLMIIHTGLQI) form a helical membrane-spanning segment. Topologically, residues 461-463 (WSN) are cytoplasmic. Residues 464–484 (FSNINNSQLIFGLILVALQTW) form a helical membrane-spanning segment. At 485 to 534 (CDKETRLAISDFGWFYGDFFLSNYISTRKLTSQGIYRYLNHPEAVLGVVG) the chain is on the lumenal side. A helical transmembrane segment spans residues 535-555 (VWGTVLMTNFAVTNIILAVLW). Residues 556–869 (TLTNFILVKF…DIKQTLDSLA (314 aa)) are Cytoplasmic-facing.

This sequence belongs to the class VI-like SAM-binding methyltransferase superfamily. CHO2 family.

It is found in the endoplasmic reticulum membrane. It carries out the reaction a 1,2-diacyl-sn-glycero-3-phosphoethanolamine + S-adenosyl-L-methionine = a 1,2-diacyl-sn-glycero-3-phospho-N-methylethanolamine + S-adenosyl-L-homocysteine + H(+). It participates in phospholipid metabolism; phosphatidylcholine biosynthesis. Functionally, catalyzes the first step of the methylation pathway of phosphatidylcholine biosynthesis, the SAM-dependent methylation of phosphatidylethanolamine (PE) to phosphatidylmonomethylethanolamine (PMME). Preferentially converts di-C16:1 substrates. This is Phosphatidylethanolamine N-methyltransferase from Saccharomyces cerevisiae (strain ATCC 204508 / S288c) (Baker's yeast).